The primary structure comprises 272 residues: 3-methyl-2-oxobutanoate hydroxymethyltransferase (272 aa).

Asp-43 and Asp-82 together coordinate Mg(2+). 3-methyl-2-oxobutanoate-binding positions include 43–44 (DS), Asp-82, and Lys-112. Glu-114 is a binding site for Mg(2+). The Proton acceptor role is filled by Glu-179.

The protein belongs to the PanB family. In terms of assembly, homodecamer; pentamer of dimers. Mg(2+) serves as cofactor.

It localises to the cytoplasm. It catalyses the reaction 3-methyl-2-oxobutanoate + (6R)-5,10-methylene-5,6,7,8-tetrahydrofolate + H2O = 2-dehydropantoate + (6S)-5,6,7,8-tetrahydrofolate. It functions in the pathway cofactor biosynthesis; (R)-pantothenate biosynthesis; (R)-pantoate from 3-methyl-2-oxobutanoate: step 1/2. In terms of biological role, catalyzes the reversible reaction in which hydroxymethyl group from 5,10-methylenetetrahydrofolate is transferred onto alpha-ketoisovalerate to form ketopantoate. The chain is 3-methyl-2-oxobutanoate hydroxymethyltransferase from Staphylococcus aureus (strain JH1).